The primary structure comprises 519 residues: Methionine--tRNA ligase (519 aa).

Residues Ala11 to His21 carry the 'HIGH' region motif. A 'KMSKS' region motif is present at residues Lys299–Ser303. An ATP-binding site is contributed by Lys302. Residues Leu500–Lys519 are disordered.

It belongs to the class-I aminoacyl-tRNA synthetase family. MetG type 2B subfamily. In terms of assembly, monomer.

It is found in the cytoplasm. The catalysed reaction is tRNA(Met) + L-methionine + ATP = L-methionyl-tRNA(Met) + AMP + diphosphate. Functionally, is required not only for elongation of protein synthesis but also for the initiation of all mRNA translation through initiator tRNA(fMet) aminoacylation. This Mycobacterium tuberculosis (strain ATCC 25618 / H37Rv) protein is Methionine--tRNA ligase.